The sequence spans 343 residues: UDP-3-O-acylglucosamine N-acyltransferase (343 aa).

Residue His-248 is the Proton acceptor of the active site.

This sequence belongs to the transferase hexapeptide repeat family. LpxD subfamily. In terms of assembly, homotrimer.

It catalyses the reaction a UDP-3-O-[(3R)-3-hydroxyacyl]-alpha-D-glucosamine + a (3R)-hydroxyacyl-[ACP] = a UDP-2-N,3-O-bis[(3R)-3-hydroxyacyl]-alpha-D-glucosamine + holo-[ACP] + H(+). It functions in the pathway bacterial outer membrane biogenesis; LPS lipid A biosynthesis. Its function is as follows. Catalyzes the N-acylation of UDP-3-O-acylglucosamine using 3-hydroxyacyl-ACP as the acyl donor. Is involved in the biosynthesis of lipid A, a phosphorylated glycolipid that anchors the lipopolysaccharide to the outer membrane of the cell. This Microcystis aeruginosa (strain NIES-843 / IAM M-2473) protein is UDP-3-O-acylglucosamine N-acyltransferase.